The sequence spans 491 residues: MTVHFPFQNSYVALPDNFFARVAPTPVAAPRLIKLNRPLAEELGLNPAELETPEGAEILAGKTVPEGAEPIAMAYAGHQFGHFVPQLGDGRAVLLGEVVDRNGVRRDIQLKGSGPTPFSRRGDGRAALGPVLREYIVSEAMAALGIPTTRSLAAVVTGEQVYRGTALPGAVLTRVATSHIRVGTFQYFAARQDVEAVRRLADHVIGRHYPDLAGTERPYHALLAAVISRQAKLIADWLLVGFIHGVMNTDNTSVSGETIDYGPCAFMDAYDPKQVFSSIDEFGRYAFANQPRIAMWNLTRLAECLLPLFGDDKDQAIKEAETALDGFAAQFTEAHQAGLRRKLGLFTQRDGDQPLAQALFDAMALAKADFTLTFRRLSDAAGSGDLSVVRALFEDPTGFDEWAARWQQRLAVEPQTPAERRAAMRKVNPAFIPRNHRIEAVITAAVENDDYAPFEELHAVLAKPYDDQPDRADYAEPPQPEERVLQTFCGT.

The ATP site is built by glycine 88, glycine 90, arginine 91, lysine 111, aspartate 123, glycine 124, arginine 174, and arginine 181. Residue aspartate 250 is the Proton acceptor of the active site. Mg(2+) contacts are provided by asparagine 251 and aspartate 260. Aspartate 260 serves as a coordination point for ATP. Residues 466-484 (DDQPDRADYAEPPQPEERV) show a composition bias toward basic and acidic residues. Residues 466 to 491 (DDQPDRADYAEPPQPEERVLQTFCGT) are disordered.

It belongs to the SELO family. Mg(2+) serves as cofactor. It depends on Mn(2+) as a cofactor.

The catalysed reaction is L-seryl-[protein] + ATP = 3-O-(5'-adenylyl)-L-seryl-[protein] + diphosphate. The enzyme catalyses L-threonyl-[protein] + ATP = 3-O-(5'-adenylyl)-L-threonyl-[protein] + diphosphate. It carries out the reaction L-tyrosyl-[protein] + ATP = O-(5'-adenylyl)-L-tyrosyl-[protein] + diphosphate. It catalyses the reaction L-histidyl-[protein] + UTP = N(tele)-(5'-uridylyl)-L-histidyl-[protein] + diphosphate. The catalysed reaction is L-seryl-[protein] + UTP = O-(5'-uridylyl)-L-seryl-[protein] + diphosphate. The enzyme catalyses L-tyrosyl-[protein] + UTP = O-(5'-uridylyl)-L-tyrosyl-[protein] + diphosphate. Nucleotidyltransferase involved in the post-translational modification of proteins. It can catalyze the addition of adenosine monophosphate (AMP) or uridine monophosphate (UMP) to a protein, resulting in modifications known as AMPylation and UMPylation. This chain is Protein nucleotidyltransferase YdiU, found in Bradyrhizobium sp. (strain ORS 278).